We begin with the raw amino-acid sequence, 284 residues long: Tropomyosin-1 (284 aa).

Disordered stretches follow at residues 1–26 and 96–124; these read MDAI…DTCE and EEDL…DENN. The stretch at 1-276 forms a coiled coil; sequence MDAIKKKMQA…YKSLADEMDS (276 aa). Basic and acidic residues predominate over residues 12–26; it reads KLEKDNAMDKADTCE. Residues 107-121 show a composition bias toward polar residues; sequence GTAQQKLLEAQQSAD.

Belongs to the tropomyosin family. Homodimer.

Tropomyosin, in association with the troponin complex, plays a central role in the calcium dependent regulation of muscle contraction. The protein is Tropomyosin-1 of Bombyx mori (Silk moth).